A 342-amino-acid polypeptide reads, in one-letter code: DNA repair protein RAD51 homolog 1 (342 aa).

Residues 1 to 24 (MTTMEQRRNQNAVQQQDDEETQHG) are disordered. The 30-residue stretch at 51–80 (TVEGVAYTPRKDLLQIKGISDAKVDKIVEA) folds into the HhH domain. Residues 100–314 (QEIIQITSGS…LRKGRAEERI (215 aa)) form the FtsK domain. 130 to 137 (GEFRSGKT) provides a ligand contact to ATP.

It belongs to the RecA family. RAD51 subfamily. As to quaternary structure, self-associates and interacts with XRCC3. Binds to RAD54/CHR25. Interacts with BRCA2A and BRCA2B. Can form a tripartite complex with both BRCA2B and DSS1(I). As to expression, detected in various tissues. Higher expression in reproductive tissues than in vegetative tissues, with the highest expression level in young flower buds. At cellular level, is expressed at low levels in flower primordia, then at higher levels in young anthers and at highest levels in both females and males meiocytes. Not detected in gametophytes.

The protein resides in the nucleus. Its function is as follows. Binds to single and double-stranded DNA and exhibits DNA-dependent ATPase activity. Unwinds duplex DNA. Component of the meiotic recombination pathway. Seems to play a role in mediating chromosome homology search, chromosome pairing and synapsis at early stages and probably chromosome crossing-over at later stages in meiosis. Probably is involved in the repair of meiotic double strand breaks (DBSs) generated by AtSPO11-1 and in homologous recombination. Its function is dispensable for vegetative growth and root mitosis. This chain is DNA repair protein RAD51 homolog 1, found in Arabidopsis thaliana (Mouse-ear cress).